A 124-amino-acid polypeptide reads, in one-letter code: Small ribosomal subunit protein bS6 (124 aa).

The segment at 101 to 124 is disordered; the sequence is IMMKEVQREEARKSAQSDAPAVAA. The segment covering 105–115 has biased composition (basic and acidic residues); that stretch reads EVQREEARKSA.

This sequence belongs to the bacterial ribosomal protein bS6 family.

Its function is as follows. Binds together with bS18 to 16S ribosomal RNA. The polypeptide is Small ribosomal subunit protein bS6 (Polynucleobacter asymbioticus (strain DSM 18221 / CIP 109841 / QLW-P1DMWA-1) (Polynucleobacter necessarius subsp. asymbioticus)).